Reading from the N-terminus, the 308-residue chain is Probable 5-dehydro-4-deoxyglucarate dehydratase (308 aa).

This sequence belongs to the DapA family.

It carries out the reaction 5-dehydro-4-deoxy-D-glucarate + H(+) = 2,5-dioxopentanoate + CO2 + H2O. The protein operates within carbohydrate acid metabolism; D-glucarate degradation; 2,5-dioxopentanoate from D-glucarate: step 2/2. This is Probable 5-dehydro-4-deoxyglucarate dehydratase (ycbC) from Bacillus subtilis (strain 168).